The chain runs to 446 residues: Tubulin beta chain (446 aa).

8 residues coordinate GTP: glutamine 11, glutamate 69, serine 138, glycine 142, threonine 143, glycine 144, asparagine 204, and asparagine 226. Residue glutamate 69 coordinates Mg(2+). Residues 426–446 (QDATAEEEGEYVEDEDEMDGM) form a disordered region. A compositionally biased stretch (acidic residues) spans 429–446 (TAEEEGEYVEDEDEMDGM).

It belongs to the tubulin family. Dimer of alpha and beta chains. A typical microtubule is a hollow water-filled tube with an outer diameter of 25 nm and an inner diameter of 15 nM. Alpha-beta heterodimers associate head-to-tail to form protofilaments running lengthwise along the microtubule wall with the beta-tubulin subunit facing the microtubule plus end conferring a structural polarity. Microtubules usually have 13 protofilaments but different protofilament numbers can be found in some organisms and specialized cells. The cofactor is Mg(2+).

The protein resides in the cytoplasm. It is found in the cytoskeleton. Its function is as follows. Tubulin is the major constituent of microtubules, a cylinder consisting of laterally associated linear protofilaments composed of alpha- and beta-tubulin heterodimers. Microtubules grow by the addition of GTP-tubulin dimers to the microtubule end, where a stabilizing cap forms. Below the cap, tubulin dimers are in GDP-bound state, owing to GTPase activity of alpha-tubulin. This chain is Tubulin beta chain, found in Euplotes crassus.